Consider the following 337-residue polypeptide: Glycine N(alpha)-acyltransferase (337 aa).

It belongs to the acetyltransferase family.

It carries out the reaction a (3R)-hydroxyacyl-[ACP] + glycine = a lyso-glycine lipid + holo-[ACP] + H(+). The enzyme catalyses (3R)-hydroxyhexadecanoyl-[ACP] + glycine = N-[(3R)-3-hydroxyhexadecanoyl]-glycine + holo-[ACP] + H(+). The protein operates within lipid metabolism. In terms of biological role, is involved in the production of glycine lipids (GL), which are phosphorus-free membrane lipids important for fitness during growth of the human gut bacterium B.thetaiotaomicron in vivo and in vitro. Catalyzes the first step of GL biosynthesis, i.e. the N-acylation of glycine via addition of a 3-hydroxy fatty acyl group, to form a range of monoacylated glycine (also named lyso-glycine lipids or lyso-GL). Is important for the ability of B.thetaiotaomicron to adapt to stress and colonize the mammalian gut. Also seems to be required for the production of flavolipin, an acylated serine-glycine dipeptide. This is Glycine N(alpha)-acyltransferase from Bacteroides thetaiotaomicron (strain ATCC 29148 / DSM 2079 / JCM 5827 / CCUG 10774 / NCTC 10582 / VPI-5482 / E50).